Reading from the N-terminus, the 316-residue chain is Ribosomal RNA small subunit methyltransferase H (316 aa).

S-adenosyl-L-methionine is bound by residues 35 to 37 (AGH), D55, F84, D105, and Q112.

The protein belongs to the methyltransferase superfamily. RsmH family.

It is found in the cytoplasm. It carries out the reaction cytidine(1402) in 16S rRNA + S-adenosyl-L-methionine = N(4)-methylcytidine(1402) in 16S rRNA + S-adenosyl-L-homocysteine + H(+). In terms of biological role, specifically methylates the N4 position of cytidine in position 1402 (C1402) of 16S rRNA. The polypeptide is Ribosomal RNA small subunit methyltransferase H (Streptococcus pneumoniae (strain ATCC 700669 / Spain 23F-1)).